Reading from the N-terminus, the 436-residue chain is Glutamyl-tRNA reductase (436 aa).

Residues 49–52 (TCNR), serine 118, 123–125 (EPQ), and glutamine 129 each bind substrate. The active-site Nucleophile is the cysteine 50. Residue 203–208 (GAGETI) coordinates NADP(+).

It belongs to the glutamyl-tRNA reductase family. Homodimer.

It catalyses the reaction (S)-4-amino-5-oxopentanoate + tRNA(Glu) + NADP(+) = L-glutamyl-tRNA(Glu) + NADPH + H(+). It participates in porphyrin-containing compound metabolism; protoporphyrin-IX biosynthesis; 5-aminolevulinate from L-glutamyl-tRNA(Glu): step 1/2. Catalyzes the NADPH-dependent reduction of glutamyl-tRNA(Glu) to glutamate 1-semialdehyde (GSA). This chain is Glutamyl-tRNA reductase, found in Actinobacillus pleuropneumoniae serotype 7 (strain AP76).